The chain runs to 40 residues: Photosystem II reaction center protein J (40 aa).

The helical transmembrane segment at 8 to 28 (IPLWIIGTVTGIPVIGLIGIF) threads the bilayer.

It belongs to the PsbJ family. PSII is composed of 1 copy each of membrane proteins PsbA, PsbB, PsbC, PsbD, PsbE, PsbF, PsbH, PsbI, PsbJ, PsbK, PsbL, PsbM, PsbT, PsbX, PsbY, PsbZ, Psb30/Ycf12, at least 3 peripheral proteins of the oxygen-evolving complex and a large number of cofactors. It forms dimeric complexes.

Its subcellular location is the plastid. The protein localises to the chloroplast thylakoid membrane. In terms of biological role, one of the components of the core complex of photosystem II (PSII). PSII is a light-driven water:plastoquinone oxidoreductase that uses light energy to abstract electrons from H(2)O, generating O(2) and a proton gradient subsequently used for ATP formation. It consists of a core antenna complex that captures photons, and an electron transfer chain that converts photonic excitation into a charge separation. The protein is Photosystem II reaction center protein J of Citrus sinensis (Sweet orange).